Consider the following 760-residue polypeptide: Phosphatidylinositol N-acetylglucosaminyltransferase subunit Q (760 aa).

5 consecutive transmembrane segments (helical) span residues 278–298 (TVASVLLDVALGLMLLSWLHG), 349–371 (LYHIHLWISYIHLMSPFVEHILW), 378–400 (CLGLTVALSLLSDIIALLTFHIY), 446–468 (LFIGTLLFTILLFLLPTTALYYL), and 475–497 (LLVVAVQGLIHLLVDLINSLPLY). The segment at 696-748 (LAVGVEGPCQDEPPSPRHPLAPSAEQHPASGGLKQSLTPVPSGPGPSLPEPHG) is disordered.

This sequence belongs to the PIGQ family. Component of the glycosylphosphatidylinositol-N-acetylglucosaminyltransferase (GPI-GnT) complex composed at least by PIGA, PIGC, PIGH, PIGP, PIGQ, PIGY and DPM2. Interacts with PIGA, PIGH and PIGC.

It localises to the membrane. It functions in the pathway glycolipid biosynthesis; glycosylphosphatidylinositol-anchor biosynthesis. In terms of biological role, part of the glycosylphosphatidylinositol-N-acetylglucosaminyltransferase (GPI-GnT) complex that catalyzes the transfer of N-acetylglucosamine from UDP-N-acetylglucosamine to phosphatidylinositol and participates in the first step of GPI biosynthesis. The protein is Phosphatidylinositol N-acetylglucosaminyltransferase subunit Q of Homo sapiens (Human).